A 131-amino-acid polypeptide reads, in one-letter code: Arsenate reductase (131 aa).

Active-site nucleophile residues include C10, C82, and C89. 2 disulfides stabilise this stretch: C10-C82 and C82-C89.

Belongs to the low molecular weight phosphotyrosine protein phosphatase family. Thioredoxin-coupled ArsC subfamily.

Its subcellular location is the cytoplasm. It carries out the reaction arsenate + [thioredoxin]-dithiol + H(+) = arsenite + [thioredoxin]-disulfide + H2O. Functionally, catalyzes the reduction of arsenate [As(V)] to arsenite [As(III)]. This Staphylococcus aureus (strain N315) protein is Arsenate reductase.